A 1085-amino-acid polypeptide reads, in one-letter code: Protein IFH1 (1085 aa).

Disordered regions lie at residues 1–251 (MAGK…QQAL), 283–302 (KNKENNGNEEDKLDSKVMLG), 457–493 (SKLKKKEAKKREQEERKQRRKLYKKTQKPSTRTTSNV), 507–622 (DDEN…DSSV), 676–700 (VDDESTDEDDNLPPPSSRSKNIGSK), and 747–774 (QLREQHQRAQTPDVKREGSSNGNNGDEL). 2 stretches are compositionally biased toward polar residues: residues 9–18 (KSTINHSTHS) and 39–48 (RQSPPTLSTT). Residues 54–66 (SLIYSSESSLSDV) are compositionally biased toward low complexity. The span at 76 to 85 (NPHKIKRKAK) shows a compositional bias: basic residues. The span at 120 to 165 (DGEESENEEEESEEEEEDDDEDDDDDDDDGSDSDSDSETSSDDENI) shows a compositional bias: acidic residues. Polar residues predominate over residues 184–197 (AMNTNSNTLYSSRE). Ser208 carries the phosphoserine modification. Over residues 209–239 (PKKENEEEQKEEKEKEKEEQQKQQESNKKEV) the composition is skewed to basic and acidic residues. The segment covering 241-251 (GSGTTTTQQAL) has biased composition (polar residues). The segment covering 283–297 (KNKENNGNEEDKLDS) has biased composition (basic and acidic residues). Positions 474–483 (QRRKLYKKTQ) are enriched in basic residues. Positions 484 to 493 (KPSTRTTSNV) are enriched in polar residues. The segment covering 513–524 (HKSKKGRHKSGK) has biased composition (basic residues). The segment covering 546–557 (STHSTVLNSGKY) has biased composition (polar residues). Over residues 584–599 (ETSHDADTDEELRALD) the composition is skewed to basic and acidic residues. 2 stretches are compositionally biased toward acidic residues: residues 607-620 (TELDDDYEDDDDDS) and 676-686 (VDDESTDEDDN). A compositionally biased stretch (basic and acidic residues) spans 747–764 (QLREQHQRAQTPDVKREG). Ser1041 bears the Phosphoserine mark.

The protein belongs to the IFH1 family.

The protein resides in the nucleus. In terms of biological role, transcriptional coactivator that together with FHL1 regulates the expression of rRNA and ribosomal protein genes. Its activity is negatively regulated by environmental stress. This Saccharomyces cerevisiae (strain ATCC 204508 / S288c) (Baker's yeast) protein is Protein IFH1 (IFH1).